The following is a 1371-amino-acid chain: DNA-directed RNA polymerase subunit beta (1371 aa).

The protein belongs to the RNA polymerase beta chain family. In terms of assembly, the RNAP catalytic core consists of 2 alpha, 1 beta, 1 beta' and 1 omega subunit. When a sigma factor is associated with the core the holoenzyme is formed, which can initiate transcription.

The catalysed reaction is RNA(n) + a ribonucleoside 5'-triphosphate = RNA(n+1) + diphosphate. Functionally, DNA-dependent RNA polymerase catalyzes the transcription of DNA into RNA using the four ribonucleoside triphosphates as substrates. The polypeptide is DNA-directed RNA polymerase subunit beta (Citrifermentans bemidjiense (strain ATCC BAA-1014 / DSM 16622 / JCM 12645 / Bem) (Geobacter bemidjiensis)).